The chain runs to 135 residues: DNA-directed RNA polymerase subunit omega (135 aa).

Positions 107–135 (ASQESQDYEVDGEIDDEINDQDGDEEVSV) are disordered. Positions 112-135 (QDYEVDGEIDDEINDQDGDEEVSV) are enriched in acidic residues.

Belongs to the RNA polymerase subunit omega family. In terms of assembly, the RNAP catalytic core consists of 2 alpha, 1 beta, 1 beta' and 1 omega subunit. When a sigma factor is associated with the core the holoenzyme is formed, which can initiate transcription.

The catalysed reaction is RNA(n) + a ribonucleoside 5'-triphosphate = RNA(n+1) + diphosphate. Its function is as follows. Promotes RNA polymerase assembly. Latches the N- and C-terminal regions of the beta' subunit thereby facilitating its interaction with the beta and alpha subunits. This Wolbachia pipientis wMel protein is DNA-directed RNA polymerase subunit omega.